Consider the following 626-residue polypeptide: MSHTSEQGASRPVALMMGALGVVYGDIGTSPLYTLRACLTEFADLQPAHILGVLSILFWLLMVVVSFKYVLLILRADNQGEGGTLALLELAVRGRSGRLRTFFVVLGIFGAALFYGDSMITPAISVLSAIEGIGVVSHTLDPWIVPLALLVLLALFAIQSRGTGTVGKLFGPVMVVWFATLGVLGGWQVWQTPEVLVALNPIWALRFVFEFPVMSFLLLGAVVLALTGAEALYADMGHFGRPAIRRAWFSMVLPSLTLCYLGQGALLLRDPSAIRNPFFLMAPEWGLAALVGLATVATVVASQAVISGAFSVTRQAVQLGFWPRMQILHTSAVEKGQIYLPQVNALLLCAVLVLVITFRNSENLAAAYGFAVTGTMLMTSILAFAVLPRGSTGAKRLGWMLVLGVLLIIDVLLFSANIFKIHEGGWMPLLVGVVVFTLMMTWRRGRQLLADIQARDRQPLQEFMDQLESYPPARVPGTAVFMTLNNDNVPPALLHNLKHNKVLHDHVLFLSIRVADVPYIAEQDRFSVKRVSASSWQAVIHYGFKEDPDVPEALRLVAEAYPEIDLEPMRTSFFLSRQAVVAARRPAMSRWRRTVFSFMARNSTRSTKFFKIPPNRVVEMGMQIEL.

12 helical membrane passes run 13-33, 53-73, 102-122, 138-158, 169-189, 207-227, 248-268, 277-297, 338-358, 367-387, 399-419, and 421-441; these read VALM…SPLY, VLSI…VLLI, FFVV…MITP, HTLD…LFAI, LFGP…GWQV, FVFE…LALT, WFSM…ALLL, PFFL…ATVA, IYLP…VITF, AYGF…FAVL, WMLV…ANIF, and IHEG…LMMT.

Belongs to the HAK/KUP transporter (TC 2.A.72) family.

The protein localises to the cell inner membrane. The enzyme catalyses K(+)(in) + H(+)(in) = K(+)(out) + H(+)(out). Its function is as follows. Transport of potassium into the cell. Likely operates as a K(+):H(+) symporter. The polypeptide is Probable potassium transport system protein Kup (Bordetella avium (strain 197N)).